We begin with the raw amino-acid sequence, 91 residues long: Large ribosomal subunit protein bL28 (91 aa).

Residues 1-23 are disordered; sequence MSRVCELTGKGPMSGNNVSHANN.

The protein belongs to the bacterial ribosomal protein bL28 family.

This is Large ribosomal subunit protein bL28 from Paracoccus denitrificans (strain Pd 1222).